The sequence spans 383 residues: Adaptive-response sensory kinase SasA (383 aa).

Residues 152–365 enclose the Histidine kinase domain; it reads MVAHELRTPL…CFTFNVPIWQ (214 aa). His155 is subject to Phosphohistidine; by autocatalysis.

As to quaternary structure, homooligomerizes. Interacts with KaiC. Participates in the KaiABC clock complex, whose core is composed of a KaiC homohexamer, 6 KaiB and up to 6 KaiA dimers. SasA and KaiB(fs) compete to bind to KaiC.

It catalyses the reaction ATP + protein L-histidine = ADP + protein N-phospho-L-histidine.. Functionally, member of the two-component regulatory system SasA/RpaA involved in genome-wide circadian gene expression. One of several clock output pathways. Participates in the Kai clock protein complex, the main circadian regulator in cyanobacteria, via its interaction with KaiC. KaiC enhances the autophosphorylation activity of SasA, which then transfers its phosphate group to RpaA to activate it. In addition to its output function, recruits fold-shifted KaiB (KaiB(fs)) to KaiC to cooperatively form the KaiB(6):KaiC(6) complex (independent of SasA kinase activity). Required for robustness of the circadian rhythm of gene expression and is involved in clock output, also required for adaptation to light/dark cycles. The sequence is that of Adaptive-response sensory kinase SasA from Synechococcus sp. (strain CC9311).